Reading from the N-terminus, the 199-residue chain is NAD(P)H dehydrogenase (quinone) (199 aa).

The region spanning 4-190 (MLVLYYSAYG…DGARFQGRRV (187 aa)) is the Flavodoxin-like domain. FMN is bound by residues 10–15 (SAYGHM) and 78–80 (TRY). Tyr-12 serves as a coordination point for NAD(+). Residue Trp-98 participates in substrate binding. FMN is bound by residues 113–119 (STATQYG) and His-134. Positions 162–181 (GMTTTADGDGSRQPSAQELD) are disordered. Over residues 163 to 177 (MTTTADGDGSRQPSA) the composition is skewed to polar residues.

This sequence belongs to the WrbA family. The cofactor is FMN.

The enzyme catalyses a quinone + NADH + H(+) = a quinol + NAD(+). The catalysed reaction is a quinone + NADPH + H(+) = a quinol + NADP(+). This Brucella suis (strain ATCC 23445 / NCTC 10510) protein is NAD(P)H dehydrogenase (quinone).